The chain runs to 1997 residues: Chromatin-remodeling ATPase INO80 (1997 aa).

Disordered stretches follow at residues 1 to 378, 397 to 579, and 674 to 858; these read MDHF…AAPS, IAAP…AENE, and ERKK…EKVV. Residues 12–25 show a composition bias toward basic and acidic residues; that stretch reads PHFDEDGTEGRGDR. Positions 32 to 41 are enriched in pro residues; that stretch reads GPAPPPPPPR. Residues 49–64 show a composition bias toward low complexity; the sequence is NPVSSNSAVQSQAAAA. The span at 89 to 107 shows a compositional bias: polar residues; the sequence is STNSMRATPHSSSSFNLRS. A compositionally biased stretch (basic and acidic residues) spans 108-117; it reads PTREPSEYRH. Low complexity-rich tracts occupy residues 118 to 156, 203 to 230, and 240 to 251; these read PLSS…SLSS, SLQA…PLSA, and SSSSQPPARASQ. The segment covering 264–276 has biased composition (basic and acidic residues); the sequence is SFRDRDSSVREKS. Residues 288–297 show a composition bias toward polar residues; that stretch reads EASNGISGSS. The segment covering 298–317 has biased composition (basic and acidic residues); that stretch reads PRKDRDRDRDHRGTTRESQR. Composition is skewed to polar residues over residues 318–340 and 366–378; these read RSVS…SASN and VDNT…AAPS. The span at 411–420 shows a compositional bias: low complexity; the sequence is SPRLSLRPPS. Composition is skewed to polar residues over residues 433-442, 451-465, and 472-481; these read NPTNGTTSTA, SPPS…TNPS, and SFSNILSSSE. Composition is skewed to basic and acidic residues over residues 500–519 and 529–540; these read VPMK…EKKE and RISDIRHSESTP. The stretch at 666-735 forms a coiled coil; it reads ERELFAEKER…VQQTRLILQK (70 aa). Residues 689 to 707 are compositionally biased toward low complexity; the sequence is MATTMEAKAAALARASAAQ. A compositionally biased stretch (basic and acidic residues) spans 709 to 723; it reads EAERQKYMREAERAN. A compositionally biased stretch (basic residues) spans 769-781; that stretch reads TKGKGRAGARPKK. Over residues 782–793 the composition is skewed to basic and acidic residues; the sequence is SKEQKQAEKDAA. Over residues 794–806 the composition is skewed to low complexity; the sequence is EAAQAALDAGLEL. Basic and acidic residues predominate over residues 824-858; that stretch reads APKEADVDKDKENKEPQEPKEPKEPKEKVIKEKVV. In terms of domain architecture, DBINO spans 881–1006; the sequence is IWRDLARKDV…SHFIGKKIKT (126 aa). The Helicase ATP-binding domain maps to 1130 to 1302; the sequence is VNLYEQGING…WALLHFIMPS (173 aa). 1143–1150 lines the ATP pocket; that stretch reads DEMGLGKT. Residues 1253 to 1256 carry the DEAQ box motif; it reads DEAQ. The Helicase C-terminal domain occupies 1702 to 1858; it reads KLDELLRELK…GSSAAGGGVD (157 aa). Over residues 1891 to 1902 the composition is skewed to basic and acidic residues; that stretch reads ELLESGELDKMQ. The interval 1891 to 1986 is disordered; sequence ELLESGELDK…GSKKAKTTKQ (96 aa). Residues 1903 to 1914 are compositionally biased toward basic residues; sequence KKSRGGNKRKRG. Basic and acidic residues predominate over residues 1919-1933; sequence EGKEVSLDEMYHEGE. Residues 1954 to 1967 show a composition bias toward gly residues; that stretch reads AAGGEGGDGKGAVG. Over residues 1970-1985 the composition is skewed to basic residues; the sequence is AKKRKTGGSKKAKTTK.

This sequence belongs to the SNF2/RAD54 helicase family. In terms of assembly, component of the INO80 chromatin-remodeling complex.

The protein resides in the nucleus. It carries out the reaction ATP + H2O = ADP + phosphate + H(+). In terms of biological role, ATPase component of the INO80 complex which remodels chromatin by shifting nucleosomes and is involved in DNA repair. This chain is Chromatin-remodeling ATPase INO80 (crf2-1), found in Neurospora crassa (strain ATCC 24698 / 74-OR23-1A / CBS 708.71 / DSM 1257 / FGSC 987).